Consider the following 47-residue polypeptide: Small, acid-soluble spore protein N (47 aa).

A disordered region spans residues 1 to 47 (MSNPRGNPKYFNPNHLGTQPRAAGGNKGKKMQDQSGQHAQVIQTKGE). A compositionally biased stretch (polar residues) spans 33 to 47 (DQSGQHAQVIQTKGE).

It belongs to the SspN family.

It is found in the spore core. This Geobacillus sp. (strain WCH70) protein is Small, acid-soluble spore protein N.